We begin with the raw amino-acid sequence, 227 residues long: Esterase OVCA2 (227 aa).

Residues Ser119, Asp179, and His206 each act as charge relay system in the active site.

The protein belongs to the LovG family.

It carries out the reaction a carboxylic ester + H2O = an alcohol + a carboxylate + H(+). Exhibits ester hydrolase activity with a strong preference for long-chain alkyl ester substrates and high selectivity against a variety of short, branched, and substituted esters. Is able to hydrolyze ester bonds within a wide range of p-nitrophenyl derivatives (C2-C14) in vitro, with a strong preference toward substrates of &gt;8 carbons. This is Esterase OVCA2 (OVCA2) from Bos taurus (Bovine).